The sequence spans 84 residues: Mitochondrial import inner membrane translocase subunit Tim9 (84 aa).

The Twin CX3C motif signature appears at 36-60 (CFQSCITNFRIRKLDDEEQLCVYKC). 2 disulfides stabilise this stretch: Cys36/Cys60 and Cys40/Cys56.

The protein belongs to the small Tim family. As to quaternary structure, heterohexamer; composed of 3 copies of timm9 and 3 copies of timm10, named soluble 70 kDa complex. Associates directly with the TIM22 complex, whose core is composed of timm22. Interacts with the transmembrane regions of multi-pass transmembrane proteins in transit.

It localises to the mitochondrion inner membrane. Component of the TIM22 complex, a complex that mediates the import and insertion of multi-pass transmembrane proteins into the mitochondrial inner membrane. The TIM22 complex forms a twin-pore translocase that uses the membrane potential as external driving force. This Dictyostelium discoideum (Social amoeba) protein is Mitochondrial import inner membrane translocase subunit Tim9 (timm9).